Reading from the N-terminus, the 330-residue chain is Intraflagellar transport protein 46 homolog (330 aa).

Disordered regions lie at residues 1–21 and 55–112; these read MDRP…ATPR and SIKT…EGVY. The span at 7-16 shows a compositional bias: acidic residues; that stretch reads ETVDIPDSED. Basic and acidic residues predominate over residues 68–79; that stretch reads SSSEKLCDRGSS. Over residues 80–101 the composition is skewed to acidic residues; the sequence is DDDDDDDNDDDEDEDDDDDDEN.

This sequence belongs to the IFT46 family.

It is found in the cytoplasm. The protein localises to the cytoskeleton. It localises to the cilium basal body. The protein resides in the cell projection. Its subcellular location is the cilium. In terms of biological role, forms part of a complex involved in intraflagellar transport (IFT), the bi-directional movement of particles required for the assembly, maintenance and functioning of primary cilia. In Schistosoma japonicum (Blood fluke), this protein is Intraflagellar transport protein 46 homolog.